Here is a 951-residue protein sequence, read N- to C-terminus: Protein translocase subunit SecA 1 (951 aa).

Residues glutamine 87, 105–109, and aspartate 525 contribute to the ATP site; that span reads GEGKT. Residues 911 to 942 are disordered; sequence PVVSADRSSRDPGNPASWGKVGRNEDCPCGSG. The Zn(2+) site is built by cysteine 937, cysteine 939, cysteine 948, and histidine 949.

This sequence belongs to the SecA family. As to quaternary structure, monomer and homodimer. Part of the essential Sec protein translocation apparatus which comprises SecA, SecYEG and auxiliary proteins SecDF-YajC and YidC. The cofactor is Zn(2+).

The protein localises to the cell inner membrane. It is found in the cytoplasm. It catalyses the reaction ATP + H2O + cellular proteinSide 1 = ADP + phosphate + cellular proteinSide 2.. Part of the Sec protein translocase complex. Interacts with the SecYEG preprotein conducting channel. Has a central role in coupling the hydrolysis of ATP to the transfer of proteins into and across the cell membrane, serving both as a receptor for the preprotein-SecB complex and as an ATP-driven molecular motor driving the stepwise translocation of polypeptide chains across the membrane. The polypeptide is Protein translocase subunit SecA 1 (Nitrobacter hamburgensis (strain DSM 10229 / NCIMB 13809 / X14)).